The following is a 29-amino-acid chain: Kappa-theraphotoxin-Ps1a (29 aa).

Cystine bridges form between C2–C16, C9–C21, and C15–C25. Residue I29 is modified to Isoleucine amide.

It belongs to the neurotoxin 30 (phrixotoxin) family. Expressed by the venom gland.

The protein localises to the secreted. Potent and specific blocker of Kv4.2/KCND2 (IC(50)=5 nM) and Kv4.3/KCND3 (IC(50)=28 nM) potassium channels. Acts by altering the gating properties of these channels. Also shows moderate inhibition on human voltage-gated sodium channel Nav1.7/SCN9A activation (IC(50)=423 nM). The polypeptide is Kappa-theraphotoxin-Ps1a (Paraphysa scrofa (Chilean copper tarantula)).